Consider the following 649-residue polypeptide: Forkhead box protein O1 (649 aa).

Disordered stretches follow at residues 1–62 and 112–151; these read MAEA…ASAS and VHSAPPQPPPTGPLSQPPPVPPAAAGPLAGQPRKTSSSRR. Threonine 24 carries the phosphothreonine; by PKB/AKT1 or PKB/AKT2 and SGK1 modification. Residues 33 to 62 are compositionally biased toward low complexity; that stretch reads NQSNSTTSSPAPSGSTAANPDATASLASAS. The segment covering 116-135 has biased composition (pro residues); that stretch reads PPQPPPTGPLSQPPPVPPAA. Positions 154 to 248 form a DNA-binding region, fork-head; it reads WGNLSYADLI…KSGKSPRRRA (95 aa). 2 DNA-binding regions span residues 205 to 212 and 228 to 231; these read NSIRHNLS and SSWW. Serine 206 bears the Phosphoserine; by STK4/MST1 mark. Residues serine 212, serine 228, and serine 229 each carry the phosphoserine modification. The disordered stretch occupies residues 228–339; the sequence is SSWWMLNPEG…DDLGDGDVHS (112 aa). N6-acetyllysine occurs at positions 239 and 242. Serine 243 carries the phosphoserine; by CDK1 modification. Omega-N-methylarginine; by PRMT1 occurs at positions 245 and 247. The Nuclear localization signal motif lies at 245-247; that stretch reads RRR. Serine 250 is subject to Phosphoserine; by PKB/AKT1 and SGK1. Lysine 256, lysine 259, and lysine 268 each carry N6-acetyllysine. The span at 258 to 269 shows a compositional bias: basic residues; sequence AKSRGRAAKKKA. A sufficient for interaction with NLK region spans residues 277-557; that stretch reads GPGDSPGSQF…RLTPVKTPLQ (281 aa). Phosphoserine is present on residues serine 281 and serine 292. Residues 303 to 320 show a composition bias toward polar residues; sequence NWSTFRPRTSSNASTISG. At serine 313 the chain carries Phosphoserine; by PKB/AKT1. Serine 316 is subject to Phosphoserine; by CK1 and SGK1. Residue serine 319 is modified to Phosphoserine; by CK1. Serine 323 carries the phosphoserine modification. Threonine 327 bears the Phosphothreonine mark. The segment at 357 to 453 is required for interaction with RUNX2; it reads SEISNPENME…GGLNQYNCAP (97 aa). At lysine 417 the chain carries N6-acetyllysine. The Required for interaction with SIRT1 signature appears at 456 to 460; sequence LKELL.

In terms of assembly, interacts with LRPPRC. Interacts with RUNX2; the interaction inhibits RUNX2 transcriptional activity and mediates the IGF1/insulin-dependent BGLAP expression in osteoblasts Interacts with PPP2R1A; the interaction regulates the dephosphorylation of FOXO1 at Thr-24 and Ser-250 leading to its nuclear import. Interacts with NLK. Interacts with SIRT1; the interaction results in the deacetylation of FOXO1 leading to activation of FOXO1-mediated transcription of genes involved in DNA repair and stress resistance. Binds to CDK1. Interacts with the 14-3-3 proteins, YWHAG and YWHAZ; the interactions require insulin-stimulated phosphorylation on Thr-24, promote nuclear exit and loss of transcriptional activity. Interacts with SKP2; the interaction ubiquitinates FOXO1 leading to its proteasomal degradation. The interaction requires the presence of KRIT1. Interacts (via the C-terminal half) with ATF4 (via its DNA binding domain); the interaction occurs in osteoblasts, regulates glucose homeostasis via suppression of beta-cell proliferation and subsequent decrease in insulin production. Interacts with PRMT1; the interaction methylates FOXO1, prevents PKB/AKT1 phosphorylation and retains FOXO1 in the nucleus. Interacts with EP300 and CREBBP; the interactions acetylate FOXO1. Interacts with SIRT2; the interaction is disrupted in response to oxidative stress or serum deprivation, leading to increased level of acetylated FOXO1, which promotes stress-induced autophagy by stimulating E1-like activating enzyme ATG7. Interacts (acetylated form) with ATG7; the interaction is increased in response to oxidative stress or serum deprivation and promotes the autophagic process leading to cell death. Interacts (acetylated form) with PPARG. Interacts with XBP1; this interaction is direct and leads to FOXO1 ubiquitination and degradation via the proteasome pathway. Interacts (via the Fork-head domain) with CEBPA; the interaction increases when FOXO1 is deacetylated. Interacts with WDFY2. Forms a complex with WDFY2 and AKT1. Interacts with CRY1. Interacts with PPIA/CYPA; the interaction promotes FOXO1 dephosphorylation, nuclear accumulation and transcriptional activity. Interacts with TOX4; FOXO1 is required for full induction of TOX4-dependent activity and the interaction is inhibited by insulin. Interacts (when phosphorylated on Ser-250) with STUB1/CHIP. Phosphorylation by NLK promotes nuclear export and inhibits the transcriptional activity. In response to growth factors, phosphorylation on Thr-24, Ser-250 and Ser-313 by PKB/AKT1 promotes nuclear export and inactivation of transactivational activity. Phosphorylation on Thr-24 is required for binding 14-3-3 proteins. Phosphorylation of Ser-250 decreases DNA-binding activity and promotes the phosphorylation of Thr-24 and Ser-313, permitting phosphorylation of Ser-316 and Ser-319, probably by CDK1, leading to nuclear exclusion and loss of function. Stress signals, such as response to oxygen or nitric oxide, attenuate the PKB/AKT1-mediated phosphorylation leading to nuclear retention. Phosphorylation of Ser-323 is independent of IGF1 and leads to reduced function. Dephosphorylated on Thr-24 and Ser-250 by PP2A in beta-cells under oxidative stress leading to nuclear retention. Phosphorylation of Ser-243 by CDK1 disrupts binding of 14-3-3 proteins leading to nuclear accumulation and has no effect on DNA binding nor transcriptional activity. Phosphorylation by STK4/MST1 on Ser-206, upon oxidative stress, inhibits binding to 14-3-3 proteins and nuclear export. PPIA/CYPA promotes its dephosphorylation on Ser-250. In terms of processing, ubiquitinated by SKP2. Ubiquitination leads to proteasomal degradation. Ubiquitinated by STUB1/CHIP; when Ser-250 is phosphorylated. Post-translationally, methylation inhibits AKT1-mediated phosphorylation at Ser-250 and is increased by oxidative stress. Acetylated. Acetylation at Lys-256 and Lys-268 are necessary for autophagic cell death induction. Deacetylated by SIRT2 in response to oxidative stress or serum deprivation, thereby negatively regulating FOXO1-mediated autophagic cell death. Once in the nucleus, acetylated by CREBBP/EP300. Acetylation diminishes the interaction with target DNA and attenuates the transcriptional activity. It increases the phosphorylation at Ser-250. Deacetylation by SIRT1 results in reactivation of the transcriptional activity. Oxidative stress by hydrogen peroxide treatment appears to promote deacetylation and uncoupling of insulin-induced phosphorylation. By contrast, resveratrol acts independently of acetylation. Acetylated at Lys-417, promoting its localization to the nucleus and transcription factor activity. Deacetylation at Lys-417 by SIRT6, promotes its translocation into the cytoplasm, preventing its transcription factor activity. Deacetylation and subsequent inhibition by SIRT6 has different effects depending on cell types: it inhibits gluconeogenesis in hepatocytes, promotes glucose sensing in pancreatic beta-cells and regulates lipid catabolism in brown adipocytes. As to expression, expressed in the internal elastic lamina of the carotid artery (at protein level).

The protein localises to the cytoplasm. It localises to the nucleus. Its function is as follows. Transcription factor that is the main target of insulin signaling and regulates metabolic homeostasis in response to oxidative stress. Binds to the insulin response element (IRE) with consensus sequence 5'-TT[G/A]TTTTG-3' and the related Daf-16 family binding element (DBE) with consensus sequence 5'-TT[G/A]TTTAC-3'. Activity suppressed by insulin. Main regulator of redox balance and osteoblast numbers and controls bone mass. Orchestrates the endocrine function of the skeleton in regulating glucose metabolism. Also acts as a key regulator of chondrogenic commitment of skeletal progenitor cells in response to lipid availability: when lipids levels are low, translocates to the nucleus and promotes expression of SOX9, which induces chondrogenic commitment and suppresses fatty acid oxidation. Acts synergistically with ATF4 to suppress osteocalcin/BGLAP activity, increasing glucose levels and triggering glucose intolerance and insulin insensitivity. Also suppresses the transcriptional activity of RUNX2, an upstream activator of osteocalcin/BGLAP. Acts as an inhibitor of glucose sensing in pancreatic beta cells by acting as a transcription repressor and suppressing expression of PDX1. In hepatocytes, promotes gluconeogenesis by acting together with PPARGC1A and CEBPA to activate the expression of genes such as IGFBP1, G6PC1 and PCK1. Also promotes gluconeogenesis by directly promoting expression of PPARGC1A and G6PC1. Important regulator of cell death acting downstream of CDK1, PKB/AKT1 and STK4/MST1. Promotes neural cell death. Mediates insulin action on adipose tissue. Regulates the expression of adipogenic genes such as PPARG during preadipocyte differentiation and, adipocyte size and adipose tissue-specific gene expression in response to excessive calorie intake. Regulates the transcriptional activity of GADD45A and repair of nitric oxide-damaged DNA in beta-cells. Required for the autophagic cell death induction in response to starvation or oxidative stress in a transcription-independent manner. Mediates the function of MLIP in cardiomyocytes hypertrophy and cardiac remodeling. Positive regulator of apoptosis in cardiac smooth muscle cells as a result of its transcriptional activation of pro-apoptotic genes. Regulates endothelial cell (EC) viability and apoptosis in a PPIA/CYPA-dependent manner via transcription of CCL2 and BCL2L11 which are involved in EC chemotaxis and apoptosis. This Rattus norvegicus (Rat) protein is Forkhead box protein O1 (Foxo1).